A 66-amino-acid chain; its full sequence is UPF0337 protein SAG0606 (66 aa).

Basic and acidic residues predominate over residues 1-10; sequence MSQEKLKSKV. Residues 1–23 form a disordered region; sequence MSQEKLKSKVEQASGSLKEGAGK.

This sequence belongs to the UPF0337 (CsbD) family.

This is UPF0337 protein SAG0606 from Streptococcus agalactiae serotype V (strain ATCC BAA-611 / 2603 V/R).